Reading from the N-terminus, the 395-residue chain is Probable isocitrate dehydrogenase [NAD] gamma 2, mitochondrial (395 aa).

The N-terminal 25 residues, 1 to 25 (MLAAGSCSVRTILQPALLLGHSREV), are a transit peptide targeting the mitochondrion. Thr-117 serves as a coordination point for citrate. Substrate-binding residues include Arg-133, Arg-164, and Asp-251. Asp-251 contributes to the Mn(2+) binding site. Asn-321 lines the ADP pocket.

This sequence belongs to the isocitrate and isopropylmalate dehydrogenases family. Heterooligomer of subunits alpha (IDH3A), beta (IDH3B), and gamma (IDH3G) in the apparent ratio of 2:1:1. The heterodimer containing one IDH3A and one IDH3B subunit and the heterodimer containing one IDH3A and one IDH3G subunit assemble into a heterotetramer (which contains two subunits of IDH3A, one of IDH3B and one of IDH3G) and further into the heterooctamer. Requires Mg(2+) as cofactor. It depends on Mn(2+) as a cofactor.

The protein localises to the mitochondrion. With respect to regulation, the heterotetramer and the heterodimer composed of IDH3A and IDH3G subunits can be allosterically activated by citrate (CIT) or/and ADP, and the two activators can act independently or synergistically. The heterodimer composed of IDH3A and IDH3B subunits cannot be allosterically regulated and the allosteric regulation of the heterotetramer is through the IDH3G subunit and not the IDH3B subunit. The IDH3G subunit contains the allosteric site which consists of a CIT-binding site and an ADP-binding site, and the binding of CIT and ADP causes conformational changes at the allosteric site which are transmitted to the active site in the catalytic subunit (IDH3A) through a cascade of conformational changes at the heterodimer interface, leading to stabilization of the isocitrate-binding at the active site and thus activation of the enzyme. ATP can activate the heterotetramer and the heterodimer composed of IDH3A and IDH3G subunits at low concentrations but inhibits their activities at high concentrations, whereas ATP exhibits only inhibitory effect on the heterodimer composed of IDH3A and IDH3B subunits. Its function is as follows. Regulatory subunit which plays a role in the allosteric regulation of the enzyme catalyzing the decarboxylation of isocitrate (ICT) into alpha-ketoglutarate. The heterodimer composed of the alpha (IDH3A) and beta (IDH3B) subunits and the heterodimer composed of the alpha (IDH3A) and gamma (IDH3G) subunits, have considerable basal activity but the full activity of the heterotetramer (containing two subunits of IDH3A, one of IDH3B and one of IDH3G) requires the assembly and cooperative function of both heterodimers. In Rattus norvegicus (Rat), this protein is Probable isocitrate dehydrogenase [NAD] gamma 2, mitochondrial.